Consider the following 380-residue polypeptide: Acid phosphatase-like protein XcAP-3 (380 aa).

A signal peptide spans 1–19 (MKATILLFLVLAVVQLSTA). 3 disulfide bridges follow: C147–C374, C167–C221, and C347–C351.

It belongs to the histidine acid phosphatase family.

Its subcellular location is the secreted. Probably modulates blood feeding of fleas on vertebrate species by binding and sequestering different mediators involved in the host response. Binds histamine. Binds leukotriene C4. Does not bind serotonin, adrenaline, noradrenaline, leukotriene B4, leukotriene D4, leukotriene E4, ADP, and stable analogs of thromboxane A2: U-46619 and cTXA2. The sequence is that of Acid phosphatase-like protein XcAP-3 from Xenopsylla cheopis (Oriental rat flea).